Here is a 154-residue protein sequence, read N- to C-terminus: Myoglobin (154 aa).

The region spanning 2 to 148 (GLSDGEWQLV…FRNDIAAKYK (147 aa)) is the Globin domain. Ser-4 carries the post-translational modification Phosphoserine. His-65 lines the nitrite pocket. Residue His-65 participates in O2 binding. Position 68 is a phosphothreonine (Thr-68). His-94 contributes to the heme b binding site.

Belongs to the globin family. In terms of assembly, monomeric.

The protein resides in the cytoplasm. It is found in the sarcoplasm. It carries out the reaction Fe(III)-heme b-[protein] + nitric oxide + H2O = Fe(II)-heme b-[protein] + nitrite + 2 H(+). The enzyme catalyses H2O2 + AH2 = A + 2 H2O. In terms of biological role, monomeric heme protein which primary function is to store oxygen and facilitate its diffusion within muscle tissues. Reversibly binds oxygen through a pentacoordinated heme iron and enables its timely and efficient release as needed during periods of heightened demand. Depending on the oxidative conditions of tissues and cells, and in addition to its ability to bind oxygen, it also has a nitrite reductase activity whereby it regulates the production of bioactive nitric oxide. Under stress conditions, like hypoxia and anoxia, it also protects cells against reactive oxygen species thanks to its pseudoperoxidase activity. The chain is Myoglobin (MB) from Meles meles (Eurasian badger).